A 100-amino-acid polypeptide reads, in one-letter code: Integration host factor subunit alpha (100 aa).

The segment at 54-73 (DLRDKRQRPGRNPKTGEEIP) is disordered.

Belongs to the bacterial histone-like protein family. Heterodimer of an alpha and a beta chain.

Its function is as follows. This protein is one of the two subunits of integration host factor, a specific DNA-binding protein that functions in genetic recombination as well as in transcriptional and translational control. The polypeptide is Integration host factor subunit alpha (Pseudomonas savastanoi pv. phaseolicola (strain 1448A / Race 6) (Pseudomonas syringae pv. phaseolicola (strain 1448A / Race 6))).